The following is a 100-amino-acid chain: Eukaryotic translation initiation factor 4E-binding protein 3 (100 aa).

The YXXXXLphi motif signature appears at 40 to 46; that stretch reads YDRKFLL. The interval 81-100 is disordered; that stretch reads LKEQETEEEIPDDAQFEMDI. Positions 85 to 100 are enriched in acidic residues; the sequence is ETEEEIPDDAQFEMDI. The short motif at 96–100 is the TOS motif element; that stretch reads FEMDI.

Belongs to the eIF4E-binding protein family. Interacts with EIF4E. Interacts with RPA2 (in unphosphorylated form via N-terminus); the interaction enhances EIF4EBP3-mediated inhibition of EIF4E-mediated mRNA nuclear export. In terms of processing, phosphorylated. Expression is highest in skeletal muscle, heart, kidney, and pancreas, whereas there is very little expression in brain and thymus.

It is found in the cytoplasm. The protein localises to the nucleus. Repressor of translation initiation that regulates EIF4E activity by preventing its assembly into the eIF4F complex: the hypophosphorylated form competes with EIF4G1/EIF4G3 and strongly binds to EIF4E, leading to repression of translation. In contrast, the hyperphosphorylated form dissociates from EIF4E, allowing interaction between EIF4G1/EIF4G3 and EIF4E, leading to initiation of translation. Inhibits EIF4E-mediated mRNA nuclear export. The chain is Eukaryotic translation initiation factor 4E-binding protein 3 (EIF4EBP3) from Homo sapiens (Human).